Reading from the N-terminus, the 220-residue chain is Zip homologous protein 1 (220 aa).

The RING-type zinc-finger motif lies at 6–44 (CNGCGCSPSKRQFFITACSHVFCETCRTTPTADFCHLCK). Residues 124–155 (LTSFEENNRKKLEDIERENEKLRNLISALELK) are a coiled coil. Disordered regions lie at residues 166–186 (EFFMQGTPTSSNPSVAGSDVD) and 201–220 (RSDSSSSNCSSQSNRGGSLF). Positions 171–180 (GTPTSSNPSV) are enriched in polar residues.

In terms of assembly, interacts with zhp-2; the interaction is required for their chromosome association and stability. In terms of tissue distribution, expressed in the germline.

It localises to the chromosome. In terms of biological role, recruited co-dependently with zhp-2 to the synaptonemal complex between homologous chromosome pairs to regulate the formation and number of crossover events between homologs during meiotic recombination. Together with zhp-2, promotes the accumulation of pro-crossover proteins, including zhp-3 and zhp-4, at a designated crossover site along the recombination intermediate. Limits the number of crossover sites along a recombination intermediate by restricting the association of these pro-crossover proteins with other recombination sites during late prophase. Also, together with zhp-2, plays a role in chromosome remodeling following crossover formation to promote two successive rounds of chromosome segregation during meiosis. The protein is Zip homologous protein 1 of Caenorhabditis elegans.